The following is a 447-amino-acid chain: MNAWEVNFDGLVGLTHHYAGLSFGNEASTCHRFQVSNPRQAAKQGLLKMKALADAGFPQAVIPPHERPFIPVLRQLGFSGSDEQVLEKVARQAPHWLSSVSSASPMWVANAATIAPSADTLDGKVHLTVANLNNKFHRSLEAHVTESLLKAIFNDKEKFSVHSALPQVALLGDEGAANHNRLGGHYGEPGMQLFVYGREEGNDTRPSRYPARQTREASEAVARLNQVNPQQVIFAQQNPDVIDQGVFHNDVIAVSNRQVLFCHQQAFARQSQLLANLRARVNGFMAIEVPATQVSVSDAVSTYLFNSQLLSRDDGSMMLVLPQECREHAGVWGYLNELLAADNPISELKVFDLRESMANGGGPACLRLRVVLTEEERRAVNPAVMMNDTLFNALNDWVDRYYRDRLTAADLADPQLLRGGREALDILSQLLNLGSVYPFQREGGGNG.

Substrate is bound by residues 19 to 28 (AGLSFGNEAS), Asn110, and 137 to 138 (HR). Glu174 is an active-site residue. Position 212 (Arg212) interacts with substrate. The active site involves His248. Residues Asp250 and Asn359 each contribute to the substrate site. Catalysis depends on Cys365, which acts as the Nucleophile.

This sequence belongs to the succinylarginine dihydrolase family. As to quaternary structure, homodimer.

The catalysed reaction is N(2)-succinyl-L-arginine + 2 H2O + 2 H(+) = N(2)-succinyl-L-ornithine + 2 NH4(+) + CO2. It participates in amino-acid degradation; L-arginine degradation via AST pathway; L-glutamate and succinate from L-arginine: step 2/5. Catalyzes the hydrolysis of N(2)-succinylarginine into N(2)-succinylornithine, ammonia and CO(2). The polypeptide is N-succinylarginine dihydrolase (Escherichia coli O139:H28 (strain E24377A / ETEC)).